We begin with the raw amino-acid sequence, 560 residues long: Membrane protein insertase YidC (560 aa).

The next 6 membrane-spanning stretches (helical) occupy residues 5-25, 334-354, 357-377, 431-451, 476-496, and 522-542; these read IINL…WQYF, AIDF…MNFF, YVGN…LLMF, LPIL…YVTI, LFGL…WPIL, and FMPL…LIYW.

This sequence belongs to the OXA1/ALB3/YidC family. Type 1 subfamily. As to quaternary structure, interacts with the Sec translocase complex via SecD. Specifically interacts with transmembrane segments of nascent integral membrane proteins during membrane integration.

Its subcellular location is the cell inner membrane. In terms of biological role, required for the insertion and/or proper folding and/or complex formation of integral membrane proteins into the membrane. Involved in integration of membrane proteins that insert both dependently and independently of the Sec translocase complex, as well as at least some lipoproteins. Aids folding of multispanning membrane proteins. In Rickettsia akari (strain Hartford), this protein is Membrane protein insertase YidC.